We begin with the raw amino-acid sequence, 504 residues long: Glycerol kinase (504 aa).

Thr12 contributes to the ADP binding site. Residues Thr12, Thr13, and Ser14 each contribute to the ATP site. Thr12 contacts sn-glycerol 3-phosphate. Arg16 is a binding site for ADP. Arg82, Glu83, Tyr134, and Asp244 together coordinate sn-glycerol 3-phosphate. Residues Arg82, Glu83, Tyr134, Asp244, and Gln245 each contribute to the glycerol site. Residues Thr266 and Gly309 each coordinate ADP. ATP is bound by residues Thr266, Gly309, Gln313, and Gly410. ADP is bound by residues Gly410 and Asn414.

Belongs to the FGGY kinase family. In terms of assembly, homotetramer and homodimer (in equilibrium).

The enzyme catalyses glycerol + ATP = sn-glycerol 3-phosphate + ADP + H(+). It functions in the pathway polyol metabolism; glycerol degradation via glycerol kinase pathway; sn-glycerol 3-phosphate from glycerol: step 1/1. Its activity is regulated as follows. Activated by phosphorylation and inhibited by fructose 1,6-bisphosphate (FBP). In terms of biological role, key enzyme in the regulation of glycerol uptake and metabolism. Catalyzes the phosphorylation of glycerol to yield sn-glycerol 3-phosphate. This Alkaliphilus oremlandii (strain OhILAs) (Clostridium oremlandii (strain OhILAs)) protein is Glycerol kinase.